Consider the following 750-residue polypeptide: MGECPLRTANVAGGGTRNRDWWPNTLKLNILRQHTEATNPYDPNFDYAEAFKSLDYEGLKKDLRALMTDSQEYWPADFGHYGGLFVRMAWHSAGTYRVMDGRGGGGQGQQRFAPLNSWPDNVSLDKARRLLWPIKQKYGNKISWADLMLLTGNVALEDMGFKTFGFAGGRPDTWEADESTYWGGETTWLGNEVRYSSGNEGHKESGVIDGSESKKGHKDIHTRDLEKPVSAAHMGLIYVNPEGPDGIPDPVAAARDIRTTFSRMAMNDEETVALIAGGHTVGKTHGAAPSDNVGPEPEAAPIENQGLGWSNKHGSGKGPDTITSGLEVIWTKEPAKFTMNYLEYLFKYEWELTKSPAGANQWVAKNAEEFIPDAFDPSKKHKPRMLTTDLSLRFDPEYEKISRRFLENPEQFKDAFARAWFKLLHRDMGPRSRWLGPEVPKETLLWEDPIPTPDHPIIDGSDVDSLKKAILATGVAPSKLIQTAWASASTFRGGDKRGGANGARIRLEPQNKWEVNNPQQLAEVLKALEGVKADFEKSGKKVSIADLIVLAGVAAVEQAAGVPVPFTPGRGDATQEQTDVESFTHLEPAADAFRNYGKGTSRVTTEQIMVDRAQQLTLTAPELTVLVGGLRVLGANYDGSSHGVWTDKPGKLTNDFFVTLLDPYTSWKSVDGEVFEGTNSKSGKKLTGTRADLVFGSHSELRALAEVYGSADGQQKFTKDFVAAWDKVMNLDRFDVRRGIYDETRLKSKL.

Positions 90-238 (WHSAGTYRVM…VSAAHMGLIY (149 aa)) form a cross-link, tryptophyl-tyrosyl-methioninium (Trp-Tyr) (with M-264). The active-site Proton acceptor is the H91. The disordered stretch occupies residues 199 to 218 (NEGHKESGVIDGSESKKGHK). Residues 200–218 (EGHKESGVIDGSESKKGHK) are compositionally biased toward basic and acidic residues. A cross-link (tryptophyl-tyrosyl-methioninium (Tyr-Met) (with W-90)) is located at residues 238-264 (YVNPEGPDGIPDPVAAARDIRTTFSRM). H279 provides a ligand contact to heme b.

It belongs to the peroxidase family. Peroxidase/catalase subfamily. In terms of assembly, homodimer or homotetramer. Predominantly homodimeric. It depends on heme b as a cofactor. Post-translationally, formation of the three residue Trp-Tyr-Met cross-link is important for the catalase, but not the peroxidase activity of the enzyme.

The protein resides in the cytoplasm. It catalyses the reaction H2O2 + AH2 = A + 2 H2O. It carries out the reaction 2 H2O2 = O2 + 2 H2O. In terms of biological role, bifunctional enzyme with both catalase and broad-spectrum peroxidase activity. In Pyricularia oryzae (strain 70-15 / ATCC MYA-4617 / FGSC 8958) (Rice blast fungus), this protein is Catalase-peroxidase 1.